Reading from the N-terminus, the 573-residue chain is Eukaryotic translation initiation factor 3 subunit D (573 aa).

Residues 111–162 (VFTRGGRGQRGARGTERGGRAQLSRGRGGQYGGGYDRGGRSAAGGRGGRRFG) are disordered. Residues 136–156 (GRGGQYGGGYDRGGRSAAGGR) show a composition bias toward gly residues. Positions 301 to 315 (ALDMVTVNENAVDAP) are RNA gate. The interval 552-573 (PAGGLDEEEDNGDLGQEEDDEE) is disordered. A compositionally biased stretch (acidic residues) spans 556 to 573 (LDEEEDNGDLGQEEDDEE).

Belongs to the eIF-3 subunit D family. In terms of assembly, component of the eukaryotic translation initiation factor 3 (eIF-3) complex.

The protein localises to the cytoplasm. Functionally, mRNA cap-binding component of the eukaryotic translation initiation factor 3 (eIF-3) complex, which is involved in protein synthesis of a specialized repertoire of mRNAs and, together with other initiation factors, stimulates binding of mRNA and methionyl-tRNAi to the 40S ribosome. The eIF-3 complex specifically targets and initiates translation of a subset of mRNAs involved in cell proliferation. In the eIF-3 complex, eif3d specifically recognizes and binds the 7-methylguanosine cap of a subset of mRNAs. The polypeptide is Eukaryotic translation initiation factor 3 subunit D (Pyricularia oryzae (strain 70-15 / ATCC MYA-4617 / FGSC 8958) (Rice blast fungus)).